Consider the following 224-residue polypeptide: Non-structural protein 3 (224 aa).

The region spanning 34–124 (NVVPIRQASN…RYKNALFIIF (91 aa)) is the CoV 3a-like viroporin TM domain. A run of 3 helical transmembrane segments spans residues 40-60 (QASNVTGFLFTSVFVYFFALF), 69-88 (YIMLAARFAVVFLYCPLLYY), and 95-111 (ATIICCALIGRLCLVCF). Residues 128 to 203 (TLSFLNGKAA…KLYVFSQHQI (76 aa)) form the CoV 3a-like viroporin CD domain.

It is found in the host membrane. In Sus scrofa (Pig), this protein is Non-structural protein 3.